The chain runs to 377 residues: Nitric oxide reductase FlRd-NAD(+) reductase (377 aa).

This sequence belongs to the FAD-dependent oxidoreductase family. FAD serves as cofactor.

It localises to the cytoplasm. The catalysed reaction is 2 reduced [nitric oxide reductase rubredoxin domain] + NAD(+) + H(+) = 2 oxidized [nitric oxide reductase rubredoxin domain] + NADH. It participates in nitrogen metabolism; nitric oxide reduction. Its function is as follows. One of at least two accessory proteins for anaerobic nitric oxide (NO) reductase. Reduces the rubredoxin moiety of NO reductase. The polypeptide is Nitric oxide reductase FlRd-NAD(+) reductase (Shigella dysenteriae serotype 1 (strain Sd197)).